Reading from the N-terminus, the 273-residue chain is Cell division protein FtsQ (273 aa).

The Cytoplasmic segment spans residues 1–10 (MWNDARTINL). Residues 11-31 (IANTLAVLAVAAMLLAGVAWV) form a helical membrane-spanning segment. Residues 32–273 (AQRPYFTLAA…HSKSKPAKKR (242 aa)) are Periplasmic-facing. One can recognise a POTRA domain in the interval 37–110 (FTLAAIEIES…NTLRVRVEEQ (74 aa)).

This sequence belongs to the FtsQ/DivIB family. FtsQ subfamily. As to quaternary structure, part of a complex composed of FtsB, FtsL and FtsQ.

It localises to the cell inner membrane. Its function is as follows. Essential cell division protein. May link together the upstream cell division proteins, which are predominantly cytoplasmic, with the downstream cell division proteins, which are predominantly periplasmic. May control correct divisome assembly. The chain is Cell division protein FtsQ from Bordetella pertussis (strain Tohama I / ATCC BAA-589 / NCTC 13251).